The chain runs to 314 residues: Ribosomal RNA small subunit methyltransferase H (314 aa).

Residues 36–38, D56, F83, D104, and Q111 contribute to the S-adenosyl-L-methionine site; that span reads GGH.

This sequence belongs to the methyltransferase superfamily. RsmH family.

It is found in the cytoplasm. It catalyses the reaction cytidine(1402) in 16S rRNA + S-adenosyl-L-methionine = N(4)-methylcytidine(1402) in 16S rRNA + S-adenosyl-L-homocysteine + H(+). Functionally, specifically methylates the N4 position of cytidine in position 1402 (C1402) of 16S rRNA. This is Ribosomal RNA small subunit methyltransferase H from Syntrophotalea carbinolica (strain DSM 2380 / NBRC 103641 / GraBd1) (Pelobacter carbinolicus).